Here is a 99-residue protein sequence, read N- to C-terminus: Integration host factor subunit alpha (99 aa).

This sequence belongs to the bacterial histone-like protein family. Heterodimer of an alpha and a beta chain.

Its function is as follows. This protein is one of the two subunits of integration host factor, a specific DNA-binding protein that functions in genetic recombination as well as in transcriptional and translational control. In Psychrobacter cryohalolentis (strain ATCC BAA-1226 / DSM 17306 / VKM B-2378 / K5), this protein is Integration host factor subunit alpha.